The chain runs to 366 residues: MKFTIQNDILVENLKKITRLLIKNVSFPILENILIQIENGILSLTTTNLEIELVSKIKIITKYTPGKITISGRKILNICRNLSEKSEVKMPLKEKKMYVSCENSNYILSTLSADDFPNHQNFNHISNFHISSNILKEMIEKTEFSMGKQDVRYYLNGMLLEKKDNFLRSVATDGYRLAISYSKLEKDINFFSIIIPSKAVMELSRLLNTQVQLLNILIGTNSIRIYIKDLIFTTQLIEGEYPDYESVLFKEKKNPIIANCTLLKKSLLRAAILAHEKFCGIEIKIEKNKFKVLSDNQEEETAEDLFDINYLGDTIEISINVYYLLDVINNIKSENIILFLNKSKSSIQIEAENNSLNAYIIMLLKR.

Belongs to the beta sliding clamp family. Forms a ring-shaped head-to-tail homodimer around DNA which binds and tethers DNA polymerases and other proteins to the DNA. The DNA replisome complex has a single clamp-loading complex (3 tau and 1 each of delta, delta', psi and chi subunits) which binds 3 Pol III cores (1 core on the leading strand and 2 on the lagging strand) each with a beta sliding clamp dimer. Additional proteins in the replisome are other copies of gamma, psi and chi, Ssb, DNA helicase and RNA primase.

It is found in the cytoplasm. In terms of biological role, confers DNA tethering and processivity to DNA polymerases and other proteins. Acts as a clamp, forming a ring around DNA (a reaction catalyzed by the clamp-loading complex) which diffuses in an ATP-independent manner freely and bidirectionally along dsDNA. Initially characterized for its ability to contact the catalytic subunit of DNA polymerase III (Pol III), a complex, multichain enzyme responsible for most of the replicative synthesis in bacteria; Pol III exhibits 3'-5' exonuclease proofreading activity. The beta chain is required for initiation of replication as well as for processivity of DNA replication. This chain is Beta sliding clamp (dnaN), found in Buchnera aphidicola subsp. Rhopalosiphum padi.